Reading from the N-terminus, the 637-residue chain is Chaperone protein DnaK (637 aa).

Thr-196 carries the phosphothreonine; by autocatalysis modification. The disordered stretch occupies residues Ala-598–Lys-637. A compositionally biased stretch (acidic residues) spans Ala-627–Lys-637.

Belongs to the heat shock protein 70 family.

In terms of biological role, acts as a chaperone. This is Chaperone protein DnaK from Chlorobium luteolum (strain DSM 273 / BCRC 81028 / 2530) (Pelodictyon luteolum).